We begin with the raw amino-acid sequence, 234 residues long: 2,3-bisphosphoglycerate-dependent phosphoglycerate mutase (234 aa).

Substrate contacts are provided by residues arginine 10–asparagine 17, threonine 23–glycine 24, arginine 62, glutamate 89–tyrosine 92, lysine 100, arginine 116–arginine 117, and glycine 186–asparagine 187. Histidine 11 serves as the catalytic Tele-phosphohistidine intermediate. Glutamate 89 acts as the Proton donor/acceptor in catalysis.

This sequence belongs to the phosphoglycerate mutase family. BPG-dependent PGAM subfamily. As to quaternary structure, homodimer.

It catalyses the reaction (2R)-2-phosphoglycerate = (2R)-3-phosphoglycerate. It participates in carbohydrate degradation; glycolysis; pyruvate from D-glyceraldehyde 3-phosphate: step 3/5. Catalyzes the interconversion of 2-phosphoglycerate and 3-phosphoglycerate. The polypeptide is 2,3-bisphosphoglycerate-dependent phosphoglycerate mutase (Wigglesworthia glossinidia brevipalpis).